Here is a 664-residue protein sequence, read N- to C-terminus: Exoribonuclease 2 (664 aa).

Residues 193 to 521 enclose the RNB domain; the sequence is RIDMTHIPFV…INHRMLKALI (329 aa). The 83-residue stretch at 568–650 folds into the S1 motif domain; the sequence is QTLFTGEIFD…ENRSLVAKPT (83 aa).

This sequence belongs to the RNR ribonuclease family. RNase II subfamily.

It localises to the cytoplasm. It catalyses the reaction Exonucleolytic cleavage in the 3'- to 5'-direction to yield nucleoside 5'-phosphates.. Involved in mRNA degradation. Hydrolyzes single-stranded polyribonucleotides processively in the 3' to 5' direction. The polypeptide is Exoribonuclease 2 (Vibrio vulnificus (strain CMCP6)).